The following is a 375-amino-acid chain: F420-dependent formate dehydrogenase 2 subunit beta (375 aa).

4Fe-4S ferredoxin-type domains lie at 268–291 (PEPE…DVCP) and 320–349 (IRLS…AKIY). Cys-280, Cys-283, Cys-286, Cys-290, Cys-329, Cys-332, Cys-335, and Cys-339 together coordinate [4Fe-4S] cluster.

This sequence belongs to the FrhB family. As to quaternary structure, dimer of an alpha (FdhA2) and a beta (FdhB2) subunit. Requires [4Fe-4S] cluster as cofactor. It depends on FAD as a cofactor. Zn(2+) is required as a cofactor.

The catalysed reaction is oxidized coenzyme F420-(gamma-L-Glu)(n) + formate + 2 H(+) = reduced coenzyme F420-(gamma-L-Glu)(n) + CO2. In terms of biological role, catalyzes the oxidation of formate to carbon dioxide, with coenzyme F420 as the electron acceptor. In vitro can also use methyl viologen as electron acceptor. The sequence is that of F420-dependent formate dehydrogenase 2 subunit beta from Methanococcus maripaludis (strain DSM 14266 / JCM 13030 / NBRC 101832 / S2 / LL).